A 113-amino-acid polypeptide reads, in one-letter code: Protein NATD1 (113 aa).

Residues 1 to 16 (MAQSPAAASPGAPEQG) show a composition bias toward low complexity. Residues 1-20 (MAQSPAAASPGAPEQGCPIR) form a disordered region. The region spanning 22 to 112 (EHDRRRRQFT…PLPQYLERLQ (91 aa)) is the N-acetyltransferase domain.

This sequence belongs to the NATD1 family.

This Bos taurus (Bovine) protein is Protein NATD1 (NATD1).